We begin with the raw amino-acid sequence, 196 residues long: uncharacterized protein (196 aa).

This sequence belongs to the flavoredoxin family. FMN is required as a cofactor.

This is an uncharacterized protein from Aquifex aeolicus (strain VF5).